The sequence spans 410 residues: Divergent protein kinase domain 1A (410 aa).

The Cytoplasmic portion of the chain corresponds to 1–5 (MARLS). A helical transmembrane segment spans residues 6–26 (YVRIKYLFFSWLAVFIGSWVI). Over 27–410 (YVRYNSYTEL…WKKISHTNDS (384 aa)) the chain is Lumenal.

Belongs to the DIPK family. In terms of processing, among the many cysteines in the lumenal domain, most are probably involved in disulfide bonds.

It localises to the endoplasmic reticulum membrane. This is Divergent protein kinase domain 1A (dipk1a) from Xenopus laevis (African clawed frog).